Reading from the N-terminus, the 713-residue chain is Meiotic activator RIM4 (713 aa).

The disordered stretch occupies residues 1–90 (MKTEISTADS…TSTSTESRGR (90 aa)). Residues 21 to 31 (ADSELVIREDI) are compositionally biased toward basic and acidic residues. The span at 50–71 (GEDSDTDSDNFLQDPEDDVDEE) shows a compositional bias: acidic residues. Positions 74 to 90 (GRGTVTTTSTSTESRGR) are enriched in low complexity. An RRM 1 domain is found at 93–172 (SCIFVASLAA…RRLRCEPAKV (80 aa)). Positions 276–337 (HQNNGIINND…SDGIYDDEDK (62 aa)) are disordered. Low complexity predominate over residues 278 to 298 (NNGIINNDGSNNNDNNNSNNN). The segment covering 299 to 327 (NREDSRRNGDVIEEECGHVHGSDSEEKLT) has biased composition (basic and acidic residues). The RRM 2 domain occupies 346–420 (RSIFVGQLDK…KTMHVQYKEV (75 aa)). The tract at residues 524–609 (KSMPNSWSSP…KRYARRSSYG (86 aa)) is disordered. Ser525 carries the post-translational modification Phosphoserine. Over residues 526–546 (MPNSWSSPSSKSVNSENESVN) the composition is skewed to low complexity. Over residues 563–574 (GRYNAANSFTTY) the composition is skewed to polar residues. Low complexity predominate over residues 575–594 (NNSSAGNSNNNNNNNNSNSN).

Post-translationally, polyubiquitinated by RSP5.

Its function is as follows. Positive regulator of sporulation-specific genes and of sporulation. Required for premeiotic DNA synthesis and meiotic chromosomal segregation. May act in a nutritional signaling pathway. This chain is Meiotic activator RIM4 (RIM4), found in Saccharomyces cerevisiae (strain ATCC 204508 / S288c) (Baker's yeast).